A 263-amino-acid chain; its full sequence is CRISPR-associated protein Cas5 2 (263 aa).

This sequence belongs to the CRISPR-associated protein Cas5 family. Subtype I-A/Apern subfamily. Part of the aCascade ribonucleoprotein complex, minimally composed of Csa2 and Cas5a, which binds crRNA. Other possible components of aCascade in strain P1 are Cas6b (SSO1437) and Csa5 (SSO1443), while SSO1399, Cas5b (SSO1400) and SSO1401 have sometimes been seen weakly associated. Csa2 is probably the major RNA-binding subunit. The Csa2-Cas5a-crRNA complex also binds target DNA homologous to crRNA, probably forming an R-loop. Purified aCascade forms a filament about 6 nm in width.

In terms of biological role, CRISPR (clustered regularly interspaced short palindromic repeat) is an adaptive immune system that provides protection against mobile genetic elements (viruses, transposable elements and conjugative plasmids). CRISPR clusters contain spacers, sequences complementary to antecedent mobile elements, and target invading nucleic acids. CRISPR clusters are transcribed and processed into CRISPR RNA (crRNA). In Saccharolobus solfataricus (strain ATCC 35092 / DSM 1617 / JCM 11322 / P2) (Sulfolobus solfataricus), this protein is CRISPR-associated protein Cas5 2 (cas5b).